The primary structure comprises 443 residues: D-inositol 3-phosphate glycosyltransferase (443 aa).

Residue His-30 participates in 1D-myo-inositol 3-phosphate binding. Residues 36 to 37 (QP) and Gly-44 contribute to the UDP-N-acetyl-alpha-D-glucosamine site. 1D-myo-inositol 3-phosphate-binding positions include 41-46 (DAGGMN), Lys-99, Tyr-132, Thr-156, and Arg-176. UDP-N-acetyl-alpha-D-glucosamine contacts are provided by Arg-250, Lys-255, and Arg-316. The Mg(2+) site is built by Phe-325, Arg-326, and Cys-328. The UDP-N-acetyl-alpha-D-glucosamine site is built by Glu-338 and Glu-346. Thr-352 lines the Mg(2+) pocket.

This sequence belongs to the glycosyltransferase group 1 family. MshA subfamily. Homodimer.

The enzyme catalyses 1D-myo-inositol 3-phosphate + UDP-N-acetyl-alpha-D-glucosamine = 1D-myo-inositol 2-acetamido-2-deoxy-alpha-D-glucopyranoside 3-phosphate + UDP + H(+). Its function is as follows. Catalyzes the transfer of a N-acetyl-glucosamine moiety to 1D-myo-inositol 3-phosphate to produce 1D-myo-inositol 2-acetamido-2-deoxy-glucopyranoside 3-phosphate in the mycothiol biosynthesis pathway. This Stackebrandtia nassauensis (strain DSM 44728 / CIP 108903 / NRRL B-16338 / NBRC 102104 / LLR-40K-21) protein is D-inositol 3-phosphate glycosyltransferase.